Consider the following 500-residue polypeptide: Arabinofuranosidase/B-xylosidase (500 aa).

An N-terminal signal peptide occupies residues Met-1 to Ala-21. An N-linked (GlcNAc...) asparagine glycan is attached at Asn-467.

It belongs to the glycosyl hydrolase 54 family.

It carries out the reaction Hydrolysis of terminal non-reducing alpha-L-arabinofuranoside residues in alpha-L-arabinosides.. It catalyses the reaction Hydrolysis of (1-&gt;4)-beta-D-xylans, to remove successive D-xylose residues from the non-reducing termini.. This chain is Arabinofuranosidase/B-xylosidase (xyl1), found in Trichoderma koningii (Hypocrea koningii).